The chain runs to 792 residues: Alpha-1,6-mannosylglycoprotein 6-beta-N-acetylglucosaminyltransferase B (792 aa).

The Cytoplasmic segment spans residues 1–24 (MITVNPDGKIMVRRCLVTLRPFRL). The helical; Signal-anchor for type II membrane protein transmembrane segment at 25 to 45 (FVLGIGFFTLCFLMTSLGGQF) threads the bilayer. At 46-792 (SARRLGDSPF…GQVALCQGCL (747 aa)) the chain is on the lumenal side. N-linked (GlcNAc...) asparagine glycosylation occurs at asparagine 127. Intrachain disulfides connect cysteine 157-cysteine 195, cysteine 168-cysteine 208, cysteine 184-cysteine 353, cysteine 387-cysteine 644, cysteine 700-cysteine 775, cysteine 704-cysteine 777, cysteine 711-cysteine 764, cysteine 732-cysteine 753, and cysteine 788-cysteine 791.

Belongs to the glycosyltransferase 18 family. It depends on Mn(2+) as a cofactor. In terms of tissue distribution, predominantly expressed in brain. Expressed in all areas of the adult and fetal brain. Also expressed at much lower levels in testis, spleen and thymus.

The protein localises to the golgi apparatus membrane. The catalysed reaction is N(4)-{beta-D-GlcNAc-(1-&gt;2)-[beta-D-GlcNAc-(1-&gt;4)]-alpha-D-Man-(1-&gt;3)-[beta-D-GlcNAc-(1-&gt;2)-alpha-D-Man-(1-&gt;6)]-beta-D-Man-(1-&gt;4)-beta-D-GlcNAc-(1-&gt;4)-beta-D-GlcNAc}-L-asparaginyl-[protein] + UDP-N-acetyl-alpha-D-glucosamine = N(4)-{beta-D-GlcNAc-(1-&gt;2)-[beta-D-GlcNAc-(1-&gt;4)]-alpha-D-Man-(1-&gt;3)-[beta-D-GlcNAc-(1-&gt;2)-[beta-D-GlcNAc-(1-&gt;6)]-alpha-D-Man-(1-&gt;6)]-beta-D-Man-(1-&gt;4)-beta-D-GlcNAc-(1-&gt;4)-beta-D-GlcNAc}-L-asparaginyl-[protein] + UDP + H(+). It catalyses the reaction 3-O-[N-acetyl-beta-D-glucosaminyl-(1-&gt;2)-alpha-D-mannosyl]-L-seryl-[protein] + UDP-N-acetyl-alpha-D-glucosamine = O(3)-{N-acetyl-beta-D-glucosaminyl-(1-&gt;2)-[N-acetyl-beta-D-glucosaminyl-(1-&gt;6)]-alpha-D-mannosyl}-L-seryl-[protein] + UDP + H(+). The enzyme catalyses 3-O-[N-acetyl-beta-D-glucosaminyl-(1-&gt;2)-alpha-D-mannosyl]-L-threonyl-[protein] + UDP-N-acetyl-alpha-D-glucosamine = O(3)-{N-acetyl-beta-D-glucosaminyl-(1-&gt;2)-[N-acetyl-beta-D-glucosaminyl-(1-&gt;6)]-alpha-D-mannosyl}-L-threonyl-[protein] + UDP + H(+). It participates in protein modification; protein glycosylation. Glycosyltransferase that acts on alpha-linked mannose of N-glycans and O-mannosyl glycans. Catalyzes the transfer of N-acetylglucosamine (GlcNAc) to the beta 1-6 linkage of the mannose residue of GlcNAc-beta1,2-Man-alpha on both the alpha1,3- and alpha1,6-linked mannose arms in the core structure of N-glycan. Also acts on the GlcNAc-beta1,2-Man-alpha1-Ser/Thr moiety, forming a 2,6-branched structure in brain O-mannosyl glycan. Plays an active role in modulating integrin and laminin-dependent adhesion and migration of neuronal cells via its activity in the O-mannosyl glycan pathway. This is Alpha-1,6-mannosylglycoprotein 6-beta-N-acetylglucosaminyltransferase B (MGAT5B) from Homo sapiens (Human).